Reading from the N-terminus, the 153-residue chain is Acetylacetone-cleaving enzyme (153 aa).

Homotetramer. Fe cation serves as cofactor.

It carries out the reaction acetylacetone + O2 = methylglyoxal + acetate + H(+). The protein operates within xenobiotic degradation; acetylacetone degradation. In terms of biological role, cleaves acetylacetone to equimolar amounts of methylglyoxal and acetate, consuming one equivalent of molecular oxygen. This Acinetobacter johnsonii protein is Acetylacetone-cleaving enzyme (dke1).